The chain runs to 135 residues: Dihydromethanopterin reductase (135 aa).

Residues Ala-9, 16–21, 52–54, and 93–97 each bind NADP(+); these read LGLNGH, PKT, and GGIAV.

Homodimer.

It carries out the reaction 5,6,7,8-tetrahydromethanopterin + NAD(+) = 7,8-dihydromethanopterin + NADH + H(+). The catalysed reaction is 5,6,7,8-tetrahydromethanopterin + NADP(+) = 7,8-dihydromethanopterin + NADPH + H(+). It participates in cofactor biosynthesis; 5,6,7,8-tetrahydromethanopterin biosynthesis. Functionally, catalyzes the reduction of dihydromethanopterin (H(2)MPT) to tetrahydromethanopterin (H(4)MPT). Shows preference for NADPH rather than NADH as electron donor. Does not reduce dihydrofolate. The chain is Dihydromethanopterin reductase (dmrA) from Methylorubrum extorquens (strain ATCC 14718 / DSM 1338 / JCM 2805 / NCIMB 9133 / AM1) (Methylobacterium extorquens).